The chain runs to 373 residues: Glutamate 5-kinase (373 aa).

K12 is an ATP binding site. Substrate-binding residues include S52, D139, and N154. 216–222 (TGGMVTK) provides a ligand contact to ATP. The region spanning 281-359 (RGSICVDDGA…QELNAVLGGN (79 aa)) is the PUA domain.

It belongs to the glutamate 5-kinase family.

It localises to the cytoplasm. The catalysed reaction is L-glutamate + ATP = L-glutamyl 5-phosphate + ADP. The protein operates within amino-acid biosynthesis; L-proline biosynthesis; L-glutamate 5-semialdehyde from L-glutamate: step 1/2. Functionally, catalyzes the transfer of a phosphate group to glutamate to form L-glutamate 5-phosphate. The chain is Glutamate 5-kinase from Dehalococcoides mccartyi (strain CBDB1).